We begin with the raw amino-acid sequence, 448 residues long: Damage-control phosphatase ARMT1 (448 aa).

Residues D257 and N258 each coordinate Mn(2+). 257–258 (DN) is a substrate binding site. 2 residues coordinate S-adenosyl-L-methionine: E262 and D295. D295 serves as a coordination point for Mn(2+). Substrate-binding positions include 371-375 (DLNYR) and K408. The Subfamily III RTxK motif signature appears at 405–408 (RTLK).

The protein belongs to the damage-control phosphatase family. Sugar phosphate phosphatase III subfamily. The cofactor is Mn(2+). It depends on Ni(2+) as a cofactor. In terms of processing, automethylated.

It carries out the reaction beta-D-fructose 1-phosphate + H2O = D-fructose + phosphate. It catalyses the reaction beta-D-fructose 6-phosphate = dihydroxyacetone + D-glyceraldehyde 3-phosphate. The enzyme catalyses L-glutamyl-[protein] + S-adenosyl-L-methionine = [protein]-L-glutamate 5-O-methyl ester + S-adenosyl-L-homocysteine. Its function is as follows. Metal-dependent phosphatase that shows phosphatase activity against several substrates, including fructose-1-phosphate and fructose-6-phosphate. Its preference for fructose-1-phosphate, a strong glycating agent that causes DNA damage rather than a canonical yeast metabolite, suggests a damage-control function in hexose phosphate metabolism. Has also been shown to have O-methyltransferase activity that methylates glutamate residues of target proteins to form gamma-glutamyl methyl ester residues. Possibly methylates PCNA, suggesting it is involved in the DNA damage response. The chain is Damage-control phosphatase ARMT1 from Danio rerio (Zebrafish).